The primary structure comprises 1219 residues: FK506-binding protein 15 (1219 aa).

M1 carries the post-translational modification N-acetylmethionine. 2 positions are modified to phosphoserine: S14 and S23. The segment at 41-66 (YTAPKQPKKGQGTAATGNQATPKTAP) is disordered. The segment covering 53–66 (TAATGNQATPKTAP) has biased composition (polar residues). Residues 72–169 (PTILVATAVH…AVEFNKQVCI (98 aa)) form an important for function in growth cone organization region. Residue K92 is modified to N6-acetyllysine. The PPIase FKBP-type domain occupies 197-290 (GDSLEVAYTG…VFEVEVRRVK (94 aa)). The tract at residues 294–349 (DSGSDGHSVSSRDSAAPSPIPGADNLSADPVVSPPTSIPFKSGEPALRTKSNSLSE) is disordered. S307, S311, S326, S344, S346, and S356 each carry phosphoserine. The disordered stretch occupies residues 381 to 433 (PQLDSNDSEIEDVNTLQGGGQPVVTPSVQPSLHPAHPALPQMTSQAPQPSVTG). A compositionally biased stretch (polar residues) spans 421–433 (QMTSQAPQPSVTG). 3 coiled-coil regions span residues 522–789 (AVSK…TDQA), 818–878 (DEHL…GVEA), and 925–951 (TLQL…AEER). Position 619 is a phosphoserine (S619). Residues 739–761 (LEKNLSERKKKSAQERSQAEEEI) form a disordered region. The disordered stretch occupies residues 931–1219 (QQEQEKEESS…DDDDDIDWLG (289 aa)). Residues S939, S940, S941, and S956 each carry the phosphoserine modification. The span at 957 to 971 (QEQSASASSGQPQAP) shows a compositional bias: low complexity. Residues S979, S1024, S1056, S1061, S1065, and S1097 each carry the phosphoserine modification. Residues 1090–1100 (QESSTRLSLTS) show a composition bias toward polar residues. At T1099 the chain carries Phosphothreonine. S1114 is subject to Phosphoserine. Basic and acidic residues predominate over residues 1123 to 1139 (LKKDDVTSSTGPHKELS). 5 positions are modified to phosphoserine: S1158, S1161, S1162, S1164, and S1195. T1203 carries the post-translational modification Phosphothreonine. Positions 1207 to 1219 (GDDDDDDDIDWLG) are enriched in acidic residues.

The protein belongs to the FKBP-type PPIase family. As to quaternary structure, interacts with WIP and actin. Interacts with TBC1D23.

It localises to the cytoplasm. It is found in the cell projection. Its subcellular location is the axon. The protein localises to the early endosome. Functionally, may be involved in the cytoskeletal organization of neuronal growth cones. Seems to be inactive as a PPIase. Involved in the transport of early endosomes at the level of transition between microfilament-based and microtubule-based movement. This is FK506-binding protein 15 (FKBP15) from Homo sapiens (Human).